The primary structure comprises 351 residues: Anthranilate phosphoribosyltransferase (351 aa).

5-phospho-alpha-D-ribose 1-diphosphate-binding positions include Gly90, 93–94, Thr98, 100–103, 118–126, and Ser130; these read GD, NIST, and KHGNRSASG. Gly90 provides a ligand contact to anthranilate. Ser102 contacts Mg(2+). Asn121 is a binding site for anthranilate. Arg176 contributes to the anthranilate binding site. 2 residues coordinate Mg(2+): Asp235 and Glu236.

It belongs to the anthranilate phosphoribosyltransferase family. In terms of assembly, homodimer. Mg(2+) serves as cofactor.

The enzyme catalyses N-(5-phospho-beta-D-ribosyl)anthranilate + diphosphate = 5-phospho-alpha-D-ribose 1-diphosphate + anthranilate. Its pathway is amino-acid biosynthesis; L-tryptophan biosynthesis; L-tryptophan from chorismate: step 2/5. In terms of biological role, catalyzes the transfer of the phosphoribosyl group of 5-phosphorylribose-1-pyrophosphate (PRPP) to anthranilate to yield N-(5'-phosphoribosyl)-anthranilate (PRA). In Prochlorococcus marinus (strain MIT 9313), this protein is Anthranilate phosphoribosyltransferase.